Consider the following 709-residue polypeptide: Elongation factor G (709 aa).

Positions 9–292 (AYYRNIGISA…AVVEYLPSPT (284 aa)) constitute a tr-type G domain. Residues 18–25 (AHIDAGKT), 89–93 (DTPGH), and 143–146 (NKMD) each bind GTP.

The protein belongs to the TRAFAC class translation factor GTPase superfamily. Classic translation factor GTPase family. EF-G/EF-2 subfamily.

It is found in the cytoplasm. Functionally, catalyzes the GTP-dependent ribosomal translocation step during translation elongation. During this step, the ribosome changes from the pre-translocational (PRE) to the post-translocational (POST) state as the newly formed A-site-bound peptidyl-tRNA and P-site-bound deacylated tRNA move to the P and E sites, respectively. Catalyzes the coordinated movement of the two tRNA molecules, the mRNA and conformational changes in the ribosome. The protein is Elongation factor G of Blochmanniella floridana.